The chain runs to 112 residues: Prostatic steroid-binding protein C2 (112 aa).

An N-terminal signal peptide occupies residues M1–G20. At Q21 the chain carries Pyrrolidone carboxylic acid.

It belongs to the secretoglobin family. Lipophilin subfamily. Prostatein is composed of three different peptides called C1, C2 and C3. These form covalent C1:C3 (F) and C2:C3 (S) heterodimers whose noncovalent association forms tetrameric (C1:C3/C3:C2) prostatein molecules. Post-translationally, linked by three disulfide bonds to C3. The N-terminus is blocked.

It localises to the secreted. Part of prostatein which is the major secretory glycoprotein of ventral prostate gland. The sequence is that of Prostatic steroid-binding protein C2 (Psbpc2) from Rattus norvegicus (Rat).